The primary structure comprises 458 residues: V-type ATP synthase beta chain (458 aa).

It belongs to the ATPase alpha/beta chains family.

In terms of biological role, produces ATP from ADP in the presence of a proton gradient across the membrane. The V-type beta chain is a regulatory subunit. The protein is V-type ATP synthase beta chain of Enterococcus faecalis (strain ATCC 700802 / V583).